Reading from the N-terminus, the 533-residue chain is MKKNLKILVITGGVISGIGKGVTSASIARLFRYDFRVTPIKCDGYLNTDPGTINPVEHGEVFVLDDGGEVDMDFGHYERFLNLNAKSSWNITMGKIYKKILENERKGKYLGRTVQLIPHVTDEIKSTIFQIASSENSDMLIIEIGGTVGDMENILFIETVRQIRQEIGSGNISFIHLTYVPSPAGINEQKSKPTQQSVKTLNKAGIFPDLIIARSSQVLTDQIRKKVAMFCNVESTSIIDNVDVSTIYEIPISFYKQGVHEILSSKLNIKVDPKIEELSKLVGVIKSNFFVPKKIINIAICGKYAELDDSYASIRESLVHVAAHLDLLIKSTLIDSNDLNESCLKEFDGIIVPGGFGGKGYEGKIMAIKYARENNIPFLGICLGLQLAVIEFARNVCGILDADTEENLARDKPLKSPVIHLLPEQKGIKDKGATMRLGGYPVILKKNTIAFKLYGQDRIIERFRHRYEVNNDYIDLFAKNGLIVSGFSSDFKMAKLIEIPENKFFVACQFHPELITRIENPAKLFLGLIKACI.

The tract at residues 1 to 269 (MKKNLKILVI…HEILSSKLNI (269 aa)) is amidoligase domain. Ser16 is a CTP binding site. Residue Ser16 coordinates UTP. Residues 17 to 22 (GIGKGV) and Asp73 each bind ATP. Mg(2+)-binding residues include Asp73 and Glu143. CTP-binding positions include 150–152 (DME), 190–195 (KSKPTQ), and Lys226. Residues 190–195 (KSKPTQ) and Lys226 each bind UTP. Residues 304 to 533 (YAELDDSYAS…LFLGLIKACI (230 aa)) form the Glutamine amidotransferase type-1 domain. Gly355 lines the L-glutamine pocket. Residue Cys382 is the Nucleophile; for glutamine hydrolysis of the active site. L-glutamine contacts are provided by residues 383–386 (LGLQ), Glu406, and Arg466. Residues His511 and Glu513 contribute to the active site.

This sequence belongs to the CTP synthase family. Homotetramer.

The enzyme catalyses UTP + L-glutamine + ATP + H2O = CTP + L-glutamate + ADP + phosphate + 2 H(+). It carries out the reaction L-glutamine + H2O = L-glutamate + NH4(+). The catalysed reaction is UTP + NH4(+) + ATP = CTP + ADP + phosphate + 2 H(+). Its pathway is pyrimidine metabolism; CTP biosynthesis via de novo pathway; CTP from UDP: step 2/2. Allosterically activated by GTP, when glutamine is the substrate; GTP has no effect on the reaction when ammonia is the substrate. The allosteric effector GTP functions by stabilizing the protein conformation that binds the tetrahedral intermediate(s) formed during glutamine hydrolysis. Inhibited by the product CTP, via allosteric rather than competitive inhibition. Catalyzes the ATP-dependent amination of UTP to CTP with either L-glutamine or ammonia as the source of nitrogen. Regulates intracellular CTP levels through interactions with the four ribonucleotide triphosphates. In Borreliella burgdorferi (strain ATCC 35210 / DSM 4680 / CIP 102532 / B31) (Borrelia burgdorferi), this protein is CTP synthase.